A 78-amino-acid chain; its full sequence is Large ribosomal subunit protein bL28 (78 aa).

The protein belongs to the bacterial ribosomal protein bL28 family.

The polypeptide is Large ribosomal subunit protein bL28 (Acaryochloris marina (strain MBIC 11017)).